A 616-amino-acid chain; its full sequence is Protein phosphatase EYA4 (616 aa).

Met-1 bears the N-acetylmethionine mark. Disordered regions lie at residues 1 to 66, 186 to 211, and 277 to 345; these read MEDT…VTTN, SQTQSPLQSGCLSYSPGFSTPQPGQT, and ADGT…DSDL. Glycyl lysine isopeptide (Lys-Gly) (interchain with G-Cter in SUMO2) cross-links involve residues Lys-14 and Lys-52. Residues 56-66 show a composition bias toward low complexity; that stretch reads SGLSSTSVTTN. Over residues 277–311 the composition is skewed to polar residues; that stretch reads ADGTSSSTSTYQLQESLQGLTSQPGEFDTVQSPST. At Ser-338 the chain carries Phosphoserine. Asp-352 acts as the Nucleophile in catalysis. Asp-352, Asp-354, and Asp-580 together coordinate Mg(2+). Asp-354 serves as the catalytic Proton donor.

The protein belongs to the HAD-like hydrolase superfamily. EYA family. As to quaternary structure, interacts with SIX3; translocates EYA4 from the cytoplasm to the nucleus and promotes activation of their target genes. Requires Mg(2+) as cofactor. In the embryo, expressed mainly in the craniofacial mesenchyme, dermamyotome and limb.

Its subcellular location is the cytoplasm. The protein resides in the nucleus. It catalyses the reaction O-phospho-L-tyrosyl-[protein] + H2O = L-tyrosyl-[protein] + phosphate. In terms of biological role, tyrosine phosphatase that specifically dephosphorylates 'Tyr-142' of histone H2AX (H2AXY142ph). 'Tyr-142' phosphorylation of histone H2AX plays a central role in DNA repair and acts as a mark that distinguishes between apoptotic and repair responses to genotoxic stress. Promotes efficient DNA repair by dephosphorylating H2AX, promoting the recruitment of DNA repair complexes containing MDC1. Its function as histone phosphatase probably explains its role in transcription regulation during organogenesis. May be involved in development of the eye. This Mus musculus (Mouse) protein is Protein phosphatase EYA4 (Eya4).